Consider the following 1580-residue polypeptide: Transcriptional activator GLI3 (1580 aa).

At Met1 the chain carries N-acetylmethionine. Composition is skewed to polar residues over residues 1–10 (MEAQSHSSTT) and 58–78 (ITMQ…PSTS). Residues 1–79 (MEAQSHSSTT…KVSEEPSTSS (79 aa)) form a disordered region. At Arg175 the chain carries Omega-N-methylarginine. The disordered stretch occupies residues 368–475 (QSLGSAFGHS…DKDESKQEPE (108 aa)). Over residues 401 to 427 (NPVQVSSGPSESSQNKPTSESAVSSTG) the composition is skewed to polar residues. Glycyl lysine isopeptide (Lys-Gly) (interchain with G-Cter in SUMO2) cross-links involve residues Lys438 and Lys462. Residues 461-474 (VKEEGDKDESKQEP) show a composition bias toward basic and acidic residues. 5 C2H2-type zinc fingers span residues 480 to 505 (TNCH…NNDH), 513 to 540 (FVCR…MRRH), 546 to 570 (HKCT…LRSH), 576 to 601 (YVCE…NRTH), and 607 to 632 (YVCK…KTVH). The segment at 620–728 (DPSSLRKHVK…PISNYSNSGL (109 aa)) is disordered. Residues 632–648 (HGPEAHVTKKQRGDIHP) show a composition bias toward basic and acidic residues. Ser664 is modified (phosphoserine). Positions 684 to 699 (SKREECLQVKTVKAEK) are enriched in basic and acidic residues. Low complexity predominate over residues 703–726 (SQPSPGGQSSCSSQQSPISNYSNS). Positions 745-845 (DETPIMDSTI…VDVTMLNMLN (101 aa)) are mediates interaction with DZIP1. A Glycyl lysine isopeptide (Lys-Gly) (interchain with G-Cter in ubiquitin) cross-link involves residue Lys773. A Glycyl lysine isopeptide (Lys-Gly) (interchain with G-Cter in SUMO2); alternate cross-link involves residue Lys779. A Glycyl lysine isopeptide (Lys-Gly) (interchain with G-Cter in ubiquitin); alternate cross-link involves residue Lys779. Residues Lys784 and Lys800 each participate in a glycyl lysine isopeptide (Lys-Gly) (interchain with G-Cter in ubiquitin) cross-link. Ser849, Ser865, Ser877, and Ser907 each carry phosphoserine; by PKA. The segment covering 863-882 (RSSGISPCFSSRRSSEASQA) has biased composition (low complexity). A disordered region spans residues 863–918 (RSSGISPCFSSRRSSEASQAEGRPQNVSVADSYDPISTDASRRSSEASQSDGLPSL). The segment covering 908-918 (EASQSDGLPSL) has biased composition (polar residues). Phosphoserine; by PKA is present on residues Ser980 and Ser1006. A disordered region spans residues 981–1042 (DGGAHGYGRR…PAMATSAEKR (62 aa)).

This sequence belongs to the GLI C2H2-type zinc-finger protein family. The full-length GLI3 form (GLI3FL) interacts with SUFU and this interaction regulates the formation of either repressor or activator forms of GLI3. Its association with SUFU is regulated by Hh signaling and dissociation of the SUFU-GLI3 interaction requires the presence of the ciliary motor KIF3A. Interacts with KIF7. The activator form of GLI3 (GLI3A) but not the repressor form (GLI3R) can interact with TRPS1. The phosphorylated form interacts with BTRC. Interacts with ZIC1. Interacts with ZIC3 (via C2H2-type domains 3, 4 and 5); the interaction enhances its transcriptional activity. Interacts with WRD11; the interaction associates EMX1 with GLI3. Interacts with DZIP1; retains GLI3 within the cytoplasm. Phosphorylated on multiple sites by protein kinase A (PKA) and phosphorylation by PKA primes further phosphorylation by CK1 and GSK3. Phosphorylated by DYRK2 (in vitro). Phosphorylation is essential for its proteolytic processing. Post-translationally, transcriptional repressor GLI3R, a C-terminally truncated form, is generated from the full-length GLI3 protein (GLI3FL/GLI3-190) through proteolytic processing. This process requires PKA-primed phosphorylation of GLI3, ubiquitination of GLI3 and the presence of BTRC. GLI3FL is complexed with SUFU in the cytoplasm and is maintained in a neutral state. Without the Hh signal, the SUFU-GLI3 complex is recruited to cilia, leading to the efficient processing of GLI3FL into GLI3R. GLI3R formation leads to its dissociation from SUFU, allowing it to translocate into the nucleus, and repress Hh target genes. When Hh signaling is initiated, SUFU dissociates from GLI3FL and this has two consequences. First, GLI3R production is halted. Second, free GLI3FL translocates to the nucleus, where it is phosphorylated, destabilized, and converted to a transcriptional activator (GLI3A). Phosphorylated in vitro by ULK3.

It is found in the nucleus. Its subcellular location is the cytoplasm. It localises to the cell projection. The protein resides in the cilium. Functionally, has a dual function as a transcriptional activator and a repressor of the sonic hedgehog (Shh) pathway, and plays a role in limb development. The full-length GLI3 form (GLI3FL) after phosphorylation and nuclear translocation, acts as an activator (GLI3A) while GLI3R, its C-terminally truncated form, acts as a repressor. A proper balance between the GLI3 activator and the repressor GLI3R, rather than the repressor gradient itself or the activator/repressor ratio gradient, specifies limb digit number and identity. In concert with TRPS1, plays a role in regulating the size of the zone of distal chondrocytes, in restricting the zone of PTHLH expression in distal cells and in activating chondrocyte proliferation. Binds to the minimal GLI-consensus sequence 5'-GGGTGGTC-3'. Plays a role in limb and brain development. The sequence is that of Transcriptional activator GLI3 (GLI3) from Pan troglodytes (Chimpanzee).